The sequence spans 391 residues: Coproporphyrin III ferrochelatase (391 aa).

Positions 79 and 148 each coordinate Fe-coproporphyrin III. His-211 and Glu-305 together coordinate Fe(2+).

The protein belongs to the ferrochelatase family.

It is found in the cytoplasm. The enzyme catalyses Fe-coproporphyrin III + 2 H(+) = coproporphyrin III + Fe(2+). Its pathway is porphyrin-containing compound metabolism; protoheme biosynthesis. Functionally, involved in coproporphyrin-dependent heme b biosynthesis. Catalyzes the insertion of ferrous iron into coproporphyrin III to form Fe-coproporphyrin III. The polypeptide is Coproporphyrin III ferrochelatase (Tropheryma whipplei (strain TW08/27) (Whipple's bacillus)).